Here is a 341-residue protein sequence, read N- to C-terminus: Phenylalanine--tRNA ligase alpha subunit (341 aa).

Glu254 lines the Mg(2+) pocket.

Belongs to the class-II aminoacyl-tRNA synthetase family. Phe-tRNA synthetase alpha subunit type 1 subfamily. Tetramer of two alpha and two beta subunits. It depends on Mg(2+) as a cofactor.

The protein localises to the cytoplasm. The catalysed reaction is tRNA(Phe) + L-phenylalanine + ATP = L-phenylalanyl-tRNA(Phe) + AMP + diphosphate + H(+). The sequence is that of Phenylalanine--tRNA ligase alpha subunit from Chlorobium phaeovibrioides (strain DSM 265 / 1930) (Prosthecochloris vibrioformis (strain DSM 265)).